The chain runs to 165 residues: MRLTSKGRYAVTAMLDVALHSGKGPVPLAEISERQGISLSYLEQLFSRLRKHELVASVRGPGGGYLLGRDSDQIAVGAVITAVDESVDATRCQGKEGCQGGDRCLTHVLWRDLSVRISEFLNNITLAELVSNEEILDVVDRQDNDTRRPLTNGRPQETINVNLHA.

In terms of domain architecture, HTH rrf2-type spans 2–131 (RLTSKGRYAV…NNITLAELVS (130 aa)). Residues 28-51 (LAEISERQGISLSYLEQLFSRLRK) constitute a DNA-binding region (H-T-H motif). [2Fe-2S] cluster contacts are provided by cysteine 92, cysteine 98, and cysteine 104. Residues 144-165 (NDTRRPLTNGRPQETINVNLHA) form a disordered region. Positions 153-165 (GRPQETINVNLHA) are enriched in polar residues.

The cofactor is [2Fe-2S] cluster.

Its function is as follows. Regulates the transcription of several operons and genes involved in the biogenesis of Fe-S clusters and Fe-S-containing proteins. This chain is HTH-type transcriptional regulator IscR, found in Sodalis glossinidius (strain morsitans).